The sequence spans 31 residues: Cytochrome b6-f complex subunit 6 (31 aa).

A helical transmembrane segment spans residues 4–24; the sequence is ITSYFGFLLVALTITSALFIG.

The protein belongs to the PetL family. The 4 large subunits of the cytochrome b6-f complex are cytochrome b6, subunit IV (17 kDa polypeptide, PetD), cytochrome f and the Rieske protein, while the 4 small subunits are PetG, PetL, PetM and PetN. The complex functions as a dimer.

The protein resides in the plastid. It localises to the chloroplast thylakoid membrane. Component of the cytochrome b6-f complex, which mediates electron transfer between photosystem II (PSII) and photosystem I (PSI), cyclic electron flow around PSI, and state transitions. PetL is important for photoautotrophic growth as well as for electron transfer efficiency and stability of the cytochrome b6-f complex. The protein is Cytochrome b6-f complex subunit 6 of Panax ginseng (Korean ginseng).